A 414-amino-acid polypeptide reads, in one-letter code: Aspartic protease-like protein pynH (414 aa).

The signal sequence occupies residues 1 to 19; sequence MFPCSRIWSLLVAAATASA. The Peptidase A1 domain maps to 43–410; it reads FLTDIALGTP…DFEKLQVGIA (368 aa). Asparagine 93, asparagine 102, asparagine 140, asparagine 151, asparagine 173, asparagine 202, asparagine 221, asparagine 258, asparagine 272, asparagine 335, and asparagine 366 each carry an N-linked (GlcNAc...) asparagine glycan. Residues cysteine 333 and cysteine 371 are joined by a disulfide bond.

Belongs to the peptidase A1 family.

It functions in the pathway secondary metabolite biosynthesis. Aspartic protease-like protein; part of the gene cluster that mediates the biosynthesis of pyranonigrins, a family of antioxidative compounds. The first step of pyranonigrins biosynthesis is performed by the hybrid PKS-NRPS synthetase that condenses 6 malonyl-CoA units to an acetyl starter unit, to form a 1,3,5-trioxotetradecane-6,8-dienyl-ACP. The enoyl reductase (ER) domain of pynA is likely to be functional during the first two rounds of polyketide chain extension, to generate the saturated C-C bonds of the alkyl side chain. PynA subsequently forms the amide bond between the acyl chain and L-serine. Although pynA has a terminal reductase domain, it appears to require the thioesterase pynI for the release of the straight-chain intermediate from pynA via the formation of a tetramic acid pyranonigrin J. The methyltransferase pynC then coverts pyranonigrin J to pyranonigrin I via N-methylation. The FAD-dependent monooxygenase pynG catalyzes an epoxidation-mediated cyclization to form the dihydro-gamma-pyrone moiety, followed by pynD-catalyzed oxidation of the alcohol to the ketone and enolization to yield the characteristic tetramic acid-fused gamma-pyrone core of pyranonigrin H. Pyranonigrin H is substrate of pynH for dehydration-mediated exo-methylene formation from the serine side chain to produce pyranonigrin E, before the oxidase pynE reduces the exo-methylene of pyranonigrin E into a pendant methyl to form pyranonigrin G. The FAD-linked oxidoreductase pynB performs the reverse reaction and converts pyranonigrin G back to pyranonigrin E. The polypeptide is Aspartic protease-like protein pynH (Aspergillus niger (strain ATCC MYA-4892 / CBS 513.88 / FGSC A1513)).